Consider the following 632-residue polypeptide: tRNA uridine 5-carboxymethylaminomethyl modification enzyme MnmG (632 aa).

FAD contacts are provided by residues 16 to 21, valine 128, and serine 183; that span reads GAGHAG. The interval 206-225 is disordered; sequence PRVNGNTIDYSKTEEEPGDK. A compositionally biased stretch (basic and acidic residues) spans 216–225; it reads SKTEEEPGDK. 277–291 is a binding site for NAD(+); it reads GPRYCPSIEDKVVRF. Residue glutamine 374 coordinates FAD.

The protein belongs to the MnmG family. In terms of assembly, homodimer. Heterotetramer of two MnmE and two MnmG subunits. FAD is required as a cofactor.

The protein localises to the cytoplasm. Its function is as follows. NAD-binding protein involved in the addition of a carboxymethylaminomethyl (cmnm) group at the wobble position (U34) of certain tRNAs, forming tRNA-cmnm(5)s(2)U34. The protein is tRNA uridine 5-carboxymethylaminomethyl modification enzyme MnmG of Lactobacillus acidophilus (strain ATCC 700396 / NCK56 / N2 / NCFM).